Here is a 778-residue protein sequence, read N- to C-terminus: Lon protease (778 aa).

Positions 8–202 (LPLIPLRGLI…NVLTVIKDEL (195 aa)) constitute a Lon N-terminal domain. Residue 354–361 (GPPGVGKT) coordinates ATP. Positions 591–772 (EDKIGVVTGM…DTVLENALIG (182 aa)) constitute a Lon proteolytic domain. Catalysis depends on residues S678 and K721.

Belongs to the peptidase S16 family. In terms of assembly, homohexamer. Organized in a ring with a central cavity.

It localises to the cytoplasm. The enzyme catalyses Hydrolysis of proteins in presence of ATP.. In terms of biological role, ATP-dependent serine protease that mediates the selective degradation of mutant and abnormal proteins as well as certain short-lived regulatory proteins. Required for cellular homeostasis and for survival from DNA damage and developmental changes induced by stress. Degrades polypeptides processively to yield small peptide fragments that are 5 to 10 amino acids long. Binds to DNA in a double-stranded, site-specific manner. The polypeptide is Lon protease (Clostridium acetobutylicum (strain ATCC 824 / DSM 792 / JCM 1419 / IAM 19013 / LMG 5710 / NBRC 13948 / NRRL B-527 / VKM B-1787 / 2291 / W)).